The primary structure comprises 55 residues: Large ribosomal subunit protein bL33 (55 aa).

It belongs to the bacterial ribosomal protein bL33 family.

The polypeptide is Large ribosomal subunit protein bL33 (Granulibacter bethesdensis (strain ATCC BAA-1260 / CGDNIH1)).